The chain runs to 110 residues: Late cornified envelope protein 2C (110 aa).

Positions 1–10 (MSCQQNQQQC) are enriched in low complexity. Positions 1-23 (MSCQQNQQQCQPPPKCPPKCTPK) are disordered. The span at 11–23 (QPPPKCPPKCTPK) shows a compositional bias: pro residues.

This sequence belongs to the LCE family. Interacts with CYSRT1; the interaction is direct. In terms of tissue distribution, skin-specific. Expression was readily detected in adult trunk skin, adult arm skin, fetal skin, penal skin, vulva, esophagus and tongue. Not expressed in the cervix, rectum, lung, colon, or placenta.

Its function is as follows. Precursors of the cornified envelope of the stratum. This Homo sapiens (Human) protein is Late cornified envelope protein 2C (LCE2C).